The sequence spans 328 residues: MNDNAFTFQTLHPETIMDALFEQGIMVDSGLTPLNSYENRVYQFQDEDRRRFVVKFYRPERWSVDQIREEHQFALELVKDEVPVAAPLAFNGQTLLAHQGYHYAIFPSVGGRQFEADNIDQMEAVGRYLGRLHQTGRKRPFTFRPDIGLAEYLFEPRQVFEDAALIPSGQKAAFLKATDTLLSAVTECWRTDFATLRLHGDCHAGNILWRDGPLFVDLDDARNGPAIQDLWMLLNGDKAEQRMQLETIIEAYEEVSEFDTAEIGLIEPLRAMRLVYYLAWLIRRWGDPAFPKNFPWLTGEDYWQRQTTTFIEQTKILHEPPLQLTPMY.

D201 functions as the Proton acceptor in the catalytic mechanism. Mg(2+) contacts are provided by N206 and D217. Residue D217 is part of the active site.

Belongs to the SrkA/RdoA protein kinase family. As to quaternary structure, monomer. Mg(2+) serves as cofactor.

The protein localises to the cytoplasm. The enzyme catalyses L-seryl-[protein] + ATP = O-phospho-L-seryl-[protein] + ADP + H(+). The catalysed reaction is L-threonyl-[protein] + ATP = O-phospho-L-threonyl-[protein] + ADP + H(+). A protein kinase that (auto)phosphorylates on Ser and Thr residues, probably involved in the extracytoplasmic stress response. Probably acts to suppress the effects of stress linked to accumulation of reactive oxygen species. This Salmonella typhimurium (strain LT2 / SGSC1412 / ATCC 700720) protein is Serine/threonine protein kinase RdoA.